The sequence spans 224 residues: UPF0758 protein VIBHAR_00653 (224 aa).

In terms of domain architecture, MPN spans Ala-102 to Ile-224. The Zn(2+) site is built by His-173, His-175, and Asp-186. The JAMM motif motif lies at His-173–Asp-186.

The protein belongs to the UPF0758 family.

The protein is UPF0758 protein VIBHAR_00653 of Vibrio campbellii (strain ATCC BAA-1116).